The sequence spans 168 residues: Pleiotrophin (168 aa).

The first 32 residues, 1-32 (MQTPQYLQQRRKFAAAFLAFIFILAAVDTAEA), serve as a signal peptide directing secretion. Intrachain disulfides connect cysteine 47-cysteine 76, cysteine 55-cysteine 85, cysteine 62-cysteine 89, cysteine 99-cysteine 131, and cysteine 109-cysteine 141. Chondroitin sulfate binding regions lie at residues 92–99 (KKQFGAEC) and 123–131 (KRALHNADC). The disordered stretch occupies residues 141–168 (CGKLTKSKPQAESKKKKKEGKKQEKMLD). The tract at residues 147–168 (SKPQAESKKKKKEGKKQEKMLD) is chondroitin sulfate A binding.

In terms of assembly, interacts with ALK and NEK6. Interacts with PTPRZ1 (via chondroitin sulfate groups); promotes formation of homooligomers; oligomerization impairs tyrosine phosphatase activity. Forms a complex with PTPRZ1 and CTNNB1; this complex inactivates PTPRZ1 protein tyrosine phosphatase activity through PTN interaction and stimulates tyrosine phosphorylation of CTNNB1. Interacts with ITGB3 and ITGA5. Forms a complex with PTPRZ1 and integrin alpha-V/beta-3 (ITGAV:ITGB3) that stimulates endothelial cell migration through ITGB3 'Tyr-773' phosphorylation. Interacts with SDC3 (via heparan sulfate chains); this interaction mediates the neurite outgrowth-promoting signal from PTN to the cytoskeleton of growing neurites; this interaction mediates osteoblast recruitment. Interacts with GPC2 (via heparan sulfate); this interaction promotes neurite outgrowth through binding of PTN with chondroitin sulfate of proteoglycans, thereby releasing PTPRS of chondroitin sulfate proteoglycans (CSPGs) and leading to binding with heparan sulfate of GPC2. Post-translationally, phosphorylated by NEK6.

Its subcellular location is the secreted. Functionally, secreted growth factor that mediates its signal through cell-surface proteoglycan and non-proteoglycan receptors. Binds cell-surface proteoglycan receptor via their chondroitin sulfate (CS) groups. Thereby regulates many processes like cell proliferation, cell survival, cell growth, cell differentiation and cell migration in several tissues namely neuron and bone. Also plays a role in synaptic plasticity and learning-related behavior by inhibiting long-term synaptic potentiation. Binds PTPRZ1, leading to neutralization of the negative charges of the CS chains of PTPRZ1, inducing PTPRZ1 clustering, thereby causing the dimerization and inactivation of its phosphatase activity leading to increased tyrosine phosphorylation of each of the PTPRZ1 substrates like ALK, CTNNB1 or AFAP1L2 in order to activate the PI3K-AKT pathway. Through PTPRZ1 binding controls oligodendrocyte precursor cell differentiation by enhancing the phosphorylation of AFAP1L2 in order to activate the PI3K-AKT pathway. Forms a complex with PTPRZ1 and integrin alpha-V/beta-3 (ITGAV:ITGB3) that stimulates endothelial cell migration through SRC dephosphorylation and activation that consequently leads to ITGB3 'Tyr-773' phosphorylation. In adult hippocampus promotes dendritic arborization, spine development, and functional integration and connectivity of newborn granule neurons through ALK by activating AKT signaling pathway. Binds GPC2 and chondroitin sulfate proteoglycans (CSPGs) at the neuron surface, leading to abrogation of binding between PTPRS and CSPGs and neurite outgrowth promotion. Binds SDC3 and mediates bone formation by recruiting and attaching osteoblasts/osteoblast precursors to the sites for new bone deposition. Binds ALK and promotes cell survival and cell proliferation through MAPK pathway activation. Inhibits proliferation and enhances differentiation of neural stem cells by inhibiting FGF2-induced fibroblast growth factor receptor signaling pathway. Mediates regulatory mechanisms in normal hemostasis and in hematopoietic regeneration and in maintaining the balance of myeloid and lymphoid regeneration. In addition may play a role in the female reproductive system, auditory response and the progesterone-induced decidualization pathway. The polypeptide is Pleiotrophin (Bos taurus (Bovine)).